The chain runs to 99 residues: Protein S100-Z (99 aa).

2 EF-hand domains span residues 13–48 (ITVF…FLMS) and 50–85 (KDPM…LTVA). Ca(2+) contacts are provided by S20, E23, D25, K28, E33, D63, N65, D67, E69, and E74.

It belongs to the S-100 family. Homodimer. Homodimers may assemble into larger stable oligomers. As to expression, in larva at 5 days post-fertilization, shows very restricted expression only in a few large cells of the olfactory placode. More widely expressed in the adult. Expressed at higher levels in gut than in spleen, head kidney and gill.

This Danio rerio (Zebrafish) protein is Protein S100-Z.